We begin with the raw amino-acid sequence, 516 residues long: 3-phosphoshikimate 1-carboxyvinyltransferase, chloroplastic (516 aa).

The N-terminal 72 residues, 1–72 (MAQINNMAQG…RISASVATAQ (72 aa)), are a transit peptide targeting the chloroplast. 3-phosphoshikimate is bound by residues lysine 95, serine 96, and arginine 100. Lysine 95 is a phosphoenolpyruvate binding site. Phosphoenolpyruvate is bound by residues glycine 173 and arginine 203. Serine 250, serine 251, glutamine 252, serine 278, aspartate 403, and lysine 430 together coordinate 3-phosphoshikimate. Glutamine 252 lines the phosphoenolpyruvate pocket. Aspartate 403 (proton acceptor) is an active-site residue. Phosphoenolpyruvate is bound by residues arginine 434, arginine 476, and lysine 501.

It belongs to the EPSP synthase family. In terms of tissue distribution, mostly expressed in flower petals, and, to a lower extent, in roots, stems and anthers, but barely in leaves.

It is found in the plastid. The protein localises to the chloroplast. The catalysed reaction is 3-phosphoshikimate + phosphoenolpyruvate = 5-O-(1-carboxyvinyl)-3-phosphoshikimate + phosphate. The protein operates within metabolic intermediate biosynthesis; chorismate biosynthesis; chorismate from D-erythrose 4-phosphate and phosphoenolpyruvate: step 6/7. Its activity is regulated as follows. Competitively inhibited by glyphosate. Its function is as follows. Catalyzes the transfer of the enolpyruvyl moiety of phosphoenolpyruvate (PEP) to the 5-hydroxyl of shikimate-3-phosphate (S3P) to produce enolpyruvyl shikimate-3-phosphate and inorganic phosphate. Involved in the accumulation of volatile benzoides in flowers, scent attracting pollinators (e.g. the night-active hawkmoth pollinator Manduca sexta). The polypeptide is 3-phosphoshikimate 1-carboxyvinyltransferase, chloroplastic (Petunia hybrida (Petunia)).